Reading from the N-terminus, the 698-residue chain is MPVSWFLLSLALGRNPVVVSLERLMEPQDTARCSLGLSCHLWDGDVLCLPGSLQSAPGPVLVPTRLQTELVLRCPQKTDCALCVRVVVHLAVHGHWAEPEEAGKSDSELQESRNASLQAQVVLSFQAYPIARCALLEVQVPADLVQPGQSVGSAVFDCFEASLGAEVQIWSYTKPRYQKELNLTQQLPDCRGLEVRDSIQSCWVLPWLNVSTDGDNVLLTLDVSEEQDFSFLLYLRPVPDALKSLWYKNLTGPQNITLNHTDLVPCLCIQVWSLEPDSERVEFCPFREDPGAHRNLWHIARLRVLSPGVWQLDAPCCLPGKVTLCWQAPDQSPCQPLVPPVPQKNATVNEPQDFQLVAGHPNLCVQVSTWEKVQLQACLWADSLGPFKDDMLLVEMKTGLNNTSVCALEPSGCTPLPSMASTRAARLGEELLQDFRSHQCMQLWNDDNMGSLWACPMDKYIHRRWVLVWLACLLLAAALFFFLLLKKDRRKAARGSRTALLLHSADGAGYERLVGALASALSQMPLRVAVDLWSRRELSAHGALAWFHHQRRRILQEGGVVILLFSPAAVAQCQQWLQLQTVEPGPHDALAAWLSCVLPDFLQGRATGRYVGVYFDGLLHPDSVPSPFRVAPLFSLPSQLPAFLDALQGGCSTSAGRPADRVERVTQALRSALDSCTSSSEAPGCCEEWDLGPCTTLE.

The signal sequence occupies residues M1–L21. The Extracellular segment spans residues E22–R464. An N-linked (GlcNAc...) asparagine glycan is attached at N182. C190 and C202 form a disulfide bridge. 4 N-linked (GlcNAc...) asparagine glycosylation sites follow: N209, N249, N255, and N259. 6 disulfide bridges follow: C266-C316, C268-C284, C325-C334, C364-C378, C406-C413, and C440-C455. Residues W465–L485 traverse the membrane as a helical segment. The Cytoplasmic segment spans residues K486–E698. Residues S496–D645 enclose the SEFIR domain.

In terms of assembly, homodimer; disulfide-linked. Heterodimer with IL17RA. Heterodimerization with IL17RA is independent of the cytoplasmic tail. Associates with non-glycosylated IL17RA constitutively. Binding of IL17A and IL17F induces association with glycosylated IL17RA. Forms complexes with 2:1 binding stoichiometry: two receptor chains for one interleukin molecule. IL17A homodimer preferentially drives the formation of IL17RA-IL17RC heterodimeric receptor complex, whereas IL17F homodimer forms predominantly complexes with IL17RC homodimer. IL17A-IL17F forms complexes with IL17RA-IL17RC, but with lower affinity when compared to IL17A homodimer. IL17RC chain cannot distinguish between IL17A and IL17F molecules, potentially enabling the formation of topologically distinct complexes. Interacts (through SEFIR domain and extended downstream region) with TRAF3IP2/ACT1 (phosphorylated). In terms of tissue distribution, highly expressed in colonic epithelial cells. Expressed in lung epithelial cells. Expressed in macrophages. Highly expressed in B-1a B cells and at a lower extent in B-1b and B-2 B cells (at protein level).

It is found in the cell membrane. Receptor for IL17A and IL17F, major effector cytokines of innate and adaptive immune system involved in antimicrobial host defense and maintenance of tissue integrity. Receptor for IL17A and IL17F homodimers as part of a heterodimeric complex with IL17RA. Receptor for the heterodimer formed by IL17A and IL17B as part of a heterodimeric complex with IL17RA. Has also been shown to be the cognate receptor for IL17F and to bind IL17A with high affinity without the need for IL17RA. Upon binding of IL17F homodimer triggers downstream activation of TRAF6 and NF-kappa-B signaling pathway. Induces transcriptional activation of IL33, a potent cytokine that stimulates group 2 innate lymphoid cells and adaptive T-helper 2 cells involved in pulmonary allergic response to fungi. Promotes sympathetic innervation of peripheral organs by coordinating the communication between gamma-delta T cells and parenchymal cells. Stimulates sympathetic innervation of thermogenic adipose tissue by driving TGFB1 expression. Binding of IL17A-IL17F to IL17RA-IL17RC heterodimeric receptor complex triggers homotypic interaction of IL17RA and IL17RC chains with TRAF3IP2 adapter through SEFIR domains. This leads to downstream TRAF6-mediated activation of NF-kappa-B and MAPkinase pathways ultimately resulting in transcriptional activation of cytokines, chemokines, antimicrobial peptides and matrix metalloproteinases, with potential strong immune inflammation. Primarily induces neutrophil activation and recruitment at infection and inflammatory sites. Stimulates the production of antimicrobial beta-defensins DEFB1, DEFB103A, and DEFB104A by mucosal epithelial cells, limiting the entry of microbes through the epithelial barriers. In Mus musculus (Mouse), this protein is Interleukin-17 receptor C (Il17rc).